Consider the following 230-residue polypeptide: Large ribosomal subunit protein uL1c (230 aa).

Belongs to the universal ribosomal protein uL1 family. In terms of assembly, part of the 50S ribosomal subunit.

It localises to the plastid. The protein localises to the chloroplast. Its function is as follows. Binds directly to 23S rRNA. Might be involved in E site tRNA release (Potential). This Thalassiosira pseudonana (Marine diatom) protein is Large ribosomal subunit protein uL1c (rpl1).